The following is a 482-amino-acid chain: Solute carrier family 49 member A3 (482 aa).

Transmembrane regions (helical) follow at residues 41 to 61 (WFVL…WISF), 81 to 101 (YLSL…SWLI), 109 to 129 (AIVF…GAIV), 150 to 170 (LCAI…SVWF), 181 to 201 (IASM…PSVV), 206 to 226 (YIAH…ILAT), 264 to 284 (VILM…SSFL), 296 to 316 (LFAG…AFVC), 330 to 350 (VKTC…VINF), 355 to 375 (VLVA…SPVG), 390 to 410 (SSTG…MILF), and 437 to 457 (TSML…IIFF).

Belongs to the major facilitator superfamily.

The protein resides in the membrane. In Xenopus tropicalis (Western clawed frog), this protein is Solute carrier family 49 member A3 (slc49a3).